The sequence spans 369 residues: Outer membrane protein P2 (369 aa).

An N-terminal signal peptide occupies residues Met1–Ala20.

The protein belongs to the Gram-negative porin family. In terms of assembly, homotrimer.

Its subcellular location is the cell outer membrane. Its function is as follows. Forms pores that allow passive diffusion of small molecules across the outer membrane. The sequence is that of Outer membrane protein P2 (ompP2) from Haemophilus influenzae.